We begin with the raw amino-acid sequence, 329 residues long: Ribosomal RNA small subunit methyltransferase H (329 aa).

Residues 34 to 36, D52, F79, D100, and Q107 each bind S-adenosyl-L-methionine; that span reads GGY. The segment at 285–329 is disordered; sequence GEDEVAHNPRARSAKLRAAERTSAPAHKDDQSSSWPRLSDVMRGG.

The protein belongs to the methyltransferase superfamily. RsmH family.

It localises to the cytoplasm. The catalysed reaction is cytidine(1402) in 16S rRNA + S-adenosyl-L-methionine = N(4)-methylcytidine(1402) in 16S rRNA + S-adenosyl-L-homocysteine + H(+). In terms of biological role, specifically methylates the N4 position of cytidine in position 1402 (C1402) of 16S rRNA. This is Ribosomal RNA small subunit methyltransferase H from Bradyrhizobium diazoefficiens (strain JCM 10833 / BCRC 13528 / IAM 13628 / NBRC 14792 / USDA 110).